A 473-amino-acid polypeptide reads, in one-letter code: Putative malate dehydrogenase 1B (473 aa).

Belongs to the LDH/MDH superfamily. MDH type 2 family.

In Bos taurus (Bovine), this protein is Putative malate dehydrogenase 1B (MDH1B).